Consider the following 1096-residue polypeptide: Serine/threonine-protein kinase mig-15 (1096 aa).

Positions 21–288 (FELIEVVGNG…TGALLRHPFI (268 aa)) constitute a Protein kinase domain. Residues 27–35 (VGNGTYGQV) and Lys50 each bind ATP. Asp151 (proton acceptor) is an active-site residue. Positions 293 to 315 (HEQTIRHSIKEHIDRNRRVKKDD) are enriched in basic and acidic residues. Disordered regions lie at residues 293–351 (HEQT…MIPM), 380–492 (LPQQ…QQSR), 517–545 (KMGG…EASI), and 574–664 (NGEG…DLLP). Positions 316 to 328 (ADYEYSGSEDDEP) are enriched in acidic residues. The span at 380–393 (LPQQPAPAPFQYQQ) shows a compositional bias: low complexity. Basic and acidic residues-rich tracts occupy residues 397 to 408 (VEPRRESSEVKL) and 453 to 472 (NYEK…ERQA). The span at 532–541 (SPPPPAPPPR) shows a compositional bias: pro residues. Over residues 629-642 (LDDDDSDSDNEEGN) the composition is skewed to acidic residues. The 293-residue stretch at 778–1070 (SGEILCAALW…KFLCERNDKV (293 aa)) folds into the CNH domain.

It belongs to the protein kinase superfamily. STE Ser/Thr protein kinase family. STE20 subfamily.

It carries out the reaction L-seryl-[protein] + ATP = O-phospho-L-seryl-[protein] + ADP + H(+). The catalysed reaction is L-threonyl-[protein] + ATP = O-phospho-L-threonyl-[protein] + ADP + H(+). Involved in cell migration and signal transduction. Important in several developmental processes including epidermal development, Q neuroblast migrations and muscle arm targeting. Required with ina-1/pat-3 to stabilize the commissural axons growth cone along a precise direction and are required for the cell to respond appropriately when signaling in the growth cone must change. During gonad morphogenesis, involved in distal tip cell (DTC) migration from the dorsal side of the hermaphrodite body to the midbody to allow for formation of gonad arms. This chain is Serine/threonine-protein kinase mig-15 (mig-15), found in Caenorhabditis elegans.